The primary structure comprises 172 residues: Adenine phosphoribosyltransferase (172 aa).

Belongs to the purine/pyrimidine phosphoribosyltransferase family. Homodimer.

The protein resides in the cytoplasm. The catalysed reaction is AMP + diphosphate = 5-phospho-alpha-D-ribose 1-diphosphate + adenine. It functions in the pathway purine metabolism; AMP biosynthesis via salvage pathway; AMP from adenine: step 1/1. Catalyzes a salvage reaction resulting in the formation of AMP, that is energically less costly than de novo synthesis. The protein is Adenine phosphoribosyltransferase of Streptococcus pyogenes serotype M5 (strain Manfredo).